The chain runs to 126 residues: Histone H2B 5 (126 aa).

The segment covering 1-12 (MPEPAKSAPAPK) has biased composition (low complexity). A disordered region spans residues 1 to 35 (MPEPAKSAPAPKKGSKKAVTKTQKKGDKKRRKSRK). An N6-acetyllysine mark is found at Lys-6 and Lys-13. Over residues 13-34 (KGSKKAVTKTQKKGDKKRRKSR) the composition is skewed to basic residues. Ser-15 is subject to Phosphoserine. An N6-acetyllysine mark is found at Lys-16 and Lys-21. The O-linked (GlcNAc) serine glycan is linked to Ser-113. Lys-121 is covalently cross-linked (Glycyl lysine isopeptide (Lys-Gly) (interchain with G-Cter in ubiquitin)).

Belongs to the histone H2B family. In terms of assembly, the nucleosome is a histone octamer containing two molecules each of H2A, H2B, H3 and H4 assembled in one H3-H4 heterotetramer and two H2A-H2B heterodimers. The octamer wraps approximately 147 bp of DNA. In terms of processing, monoubiquitination of Lys-121 by the BRE1 gives a specific tag for epigenetic transcriptional activation and is also prerequisite for histone H3 'Lys-4' and 'Lys-79' methylation. Phosphorylated on Ser-15 during apoptosis; which facilitates apoptotic chromatin condensation. Post-translationally, glcNAcylation at Ser-113 promotes monoubiquitination of Lys-121. It fluctuates in response to extracellular glucose, and associates with transcribed genes.

It localises to the nucleus. The protein resides in the chromosome. Functionally, core component of nucleosome. Nucleosomes wrap and compact DNA into chromatin, limiting DNA accessibility to the cellular machineries which require DNA as a template. Histones thereby play a central role in transcription regulation, DNA repair, DNA replication and chromosomal stability. DNA accessibility is regulated via a complex set of post-translational modifications of histones, also called histone code, and nucleosome remodeling. This chain is Histone H2B 5 (H2B-V), found in Gallus gallus (Chicken).